A 251-amino-acid polypeptide reads, in one-letter code: Cell division protein ZapD (251 aa).

It belongs to the ZapD family. Interacts with FtsZ.

It localises to the cytoplasm. Cell division factor that enhances FtsZ-ring assembly. Directly interacts with FtsZ and promotes bundling of FtsZ protofilaments, with a reduction in FtsZ GTPase activity. The polypeptide is Cell division protein ZapD (Burkholderia lata (strain ATCC 17760 / DSM 23089 / LMG 22485 / NCIMB 9086 / R18194 / 383)).